The following is a 510-amino-acid chain: NAD(P)H-quinone oxidoreductase subunit 2, chloroplastic (510 aa).

12 consecutive transmembrane segments (helical) span residues 24–44 (LLLFHGSFIFPECILIFGLIL), 59–79 (WFYFISSTSLVMSITALLFRW), 99–119 (IFQFLILLCSTLCIPLSVEYI), 124–144 (MAITEFLLFVLTATLGGMFLC), 149–169 (LITIFVAPECFSLCSYLLSGY), 183–203 (YLLMGGASSSILVHGFSWLYG), 229–249 (ISIALISITVGIGFKLSPAPF), 295–315 (WHLLLEILAILSMILGNLIAI), 323–343 (MLAYSSIGQIGYVIIGIIVGD), 347–367 (GYASMITYMLFYISMNLGTFA), 395–415 (ALSSALCLLSLGGLPPLAGFF), and 418–438 (LHLFWCGWQAGLYFLVSIGLL).

It belongs to the complex I subunit 2 family. As to quaternary structure, NDH is composed of at least 16 different subunits, 5 of which are encoded in the nucleus.

It localises to the plastid. The protein resides in the chloroplast thylakoid membrane. It carries out the reaction a plastoquinone + NADH + (n+1) H(+)(in) = a plastoquinol + NAD(+) + n H(+)(out). The catalysed reaction is a plastoquinone + NADPH + (n+1) H(+)(in) = a plastoquinol + NADP(+) + n H(+)(out). Its function is as follows. NDH shuttles electrons from NAD(P)H:plastoquinone, via FMN and iron-sulfur (Fe-S) centers, to quinones in the photosynthetic chain and possibly in a chloroplast respiratory chain. The immediate electron acceptor for the enzyme in this species is believed to be plastoquinone. Couples the redox reaction to proton translocation, and thus conserves the redox energy in a proton gradient. The sequence is that of NAD(P)H-quinone oxidoreductase subunit 2, chloroplastic from Yucca glauca (Soapweed yucca).